Consider the following 686-residue polypeptide: MAM domain-containing protein 2 (686 aa).

An N-terminal signal peptide occupies residues 1–18 (MLLEGVLLVVQALQLASA). 4 consecutive MAM domains span residues 24–169 (GSCA…YCIE), 168–329 (IECD…HCQN), 340–498 (TSCD…NCRS), and 507–666 (GECT…PCAG). Residues Asn134 and Asn329 are each glycosylated (N-linked (GlcNAc...) asparagine). Residue Asn524 is glycosylated (N-linked (GlcNAc...) asparagine). The interval 665-686 (AGMEDTTEQSSGYSEDLNEIEY) is disordered.

O-glycosylated; contains chondroitin sulfate.

The protein localises to the secreted. It localises to the extracellular space. Its subcellular location is the extracellular matrix. The chain is MAM domain-containing protein 2 (Mamdc2) from Mus musculus (Mouse).